The sequence spans 151 residues: Probable cyclic pyranopterin monophosphate synthase (151 aa).

Residues M66–H68 and M102–E103 each bind substrate. The active site involves D117.

This sequence belongs to the MoaC family. In terms of assembly, homohexamer; trimer of dimers.

The enzyme catalyses (8S)-3',8-cyclo-7,8-dihydroguanosine 5'-triphosphate = cyclic pyranopterin phosphate + diphosphate. It participates in cofactor biosynthesis; molybdopterin biosynthesis. In terms of biological role, catalyzes the conversion of (8S)-3',8-cyclo-7,8-dihydroguanosine 5'-triphosphate to cyclic pyranopterin monophosphate (cPMP). This is Probable cyclic pyranopterin monophosphate synthase from Sulfurisphaera tokodaii (strain DSM 16993 / JCM 10545 / NBRC 100140 / 7) (Sulfolobus tokodaii).